The sequence spans 384 residues: Lipid-A-disaccharide synthase (384 aa).

Belongs to the LpxB family.

The catalysed reaction is a lipid X + a UDP-2-N,3-O-bis[(3R)-3-hydroxyacyl]-alpha-D-glucosamine = a lipid A disaccharide + UDP + H(+). Its pathway is bacterial outer membrane biogenesis; LPS lipid A biosynthesis. Its function is as follows. Condensation of UDP-2,3-diacylglucosamine and 2,3-diacylglucosamine-1-phosphate to form lipid A disaccharide, a precursor of lipid A, a phosphorylated glycolipid that anchors the lipopolysaccharide to the outer membrane of the cell. This Geobacter metallireducens (strain ATCC 53774 / DSM 7210 / GS-15) protein is Lipid-A-disaccharide synthase.